A 144-amino-acid chain; its full sequence is EF-hand calcium-binding domain-containing protein 8 (144 aa).

2 consecutive EF-hand domains span residues 52 to 86 and 87 to 122; these read IHLAKIEKMFEEDINSTGALGMDAFIKAMKKVLSS and VSDEMLKELFLKVDSDCEGFVTWQKYVDYMMREFQG.

This Homo sapiens (Human) protein is EF-hand calcium-binding domain-containing protein 8 (EFCAB8).